The primary structure comprises 351 residues: tRNA-specific 2-thiouridylase MnmA (351 aa).

Residues 7–14 and Leu-33 contribute to the ATP site; that span reads GLSGGVDS. The active-site Nucleophile is the Cys-94. Residues Cys-94 and Cys-193 are joined by a disulfide bond. Gly-119 provides a ligand contact to ATP. Residues 143 to 145 are interaction with tRNA; the sequence is KDQ. The active-site Cysteine persulfide intermediate is the Cys-193. Positions 298–299 are interaction with tRNA; sequence RY.

Belongs to the MnmA/TRMU family.

The protein localises to the cytoplasm. It catalyses the reaction S-sulfanyl-L-cysteinyl-[protein] + uridine(34) in tRNA + AH2 + ATP = 2-thiouridine(34) in tRNA + L-cysteinyl-[protein] + A + AMP + diphosphate + H(+). Catalyzes the 2-thiolation of uridine at the wobble position (U34) of tRNA, leading to the formation of s(2)U34. This is tRNA-specific 2-thiouridylase MnmA from Nostoc punctiforme (strain ATCC 29133 / PCC 73102).